A 550-amino-acid chain; its full sequence is DNA gyrase subunit A (550 aa).

The Topo IIA-type catalytic domain occupies 1-550 (FRPDRSHAKS…GMATNIPPHN (550 aa)). Tyr66 acts as the O-(5'-phospho-DNA)-tyrosine intermediate in catalysis. A DOD-type homing endonuclease domain is found at 192–332 (LLGAFISEGF…VQQMLLEFGV (141 aa)).

This sequence belongs to the type II topoisomerase GyrA/ParC subunit family. Heterotetramer, composed of two GyrA and two GyrB chains. In the heterotetramer, GyrA contains the active site tyrosine that forms a transient covalent intermediate with DNA, while GyrB binds cofactors and catalyzes ATP hydrolysis. This protein undergoes a protein self splicing that involves a post-translational excision of the intervening region (intein) followed by peptide ligation.

It localises to the cytoplasm. The catalysed reaction is ATP-dependent breakage, passage and rejoining of double-stranded DNA.. Functionally, a type II topoisomerase that negatively supercoils closed circular double-stranded (ds) DNA in an ATP-dependent manner to modulate DNA topology and maintain chromosomes in an underwound state. Negative supercoiling favors strand separation, and DNA replication, transcription, recombination and repair, all of which involve strand separation. Also able to catalyze the interconversion of other topological isomers of dsDNA rings, including catenanes and knotted rings. Type II topoisomerases break and join 2 DNA strands simultaneously in an ATP-dependent manner. The protein is DNA gyrase subunit A (gyrA) of Mycobacterium gordonae.